The primary structure comprises 569 residues: uncharacterized protein (569 aa).

The first 22 residues, Met1–Ala22, serve as a signal peptide directing secretion. Positions Arg498–Gly541 are disordered. A compositionally biased stretch (low complexity) spans Ser505–Ser540.

The protein localises to the secreted. It localises to the cell surface. This is an uncharacterized protein from Schizosaccharomyces pombe (strain 972 / ATCC 24843) (Fission yeast).